The following is a 142-amino-acid chain: MTLTRHQIRERAFQMLFALNANPEADHDALYQRVLTDDPNQLVPVPDYLATLVNGVLAHQSELDAQIDQYLSTGWQLKRIAKTDLVILRMAFYEIEHVDDVPNRVAVNEALELAKNFSDDRSRRFINGVLAHTLDDETDTQA.

Belongs to the NusB family.

Involved in transcription antitermination. Required for transcription of ribosomal RNA (rRNA) genes. Binds specifically to the boxA antiterminator sequence of the ribosomal RNA (rrn) operons. In Levilactobacillus brevis (strain ATCC 367 / BCRC 12310 / CIP 105137 / JCM 1170 / LMG 11437 / NCIMB 947 / NCTC 947) (Lactobacillus brevis), this protein is Transcription antitermination protein NusB.